The primary structure comprises 70 residues: ATP synthase subunit c (70 aa).

The next 2 membrane-spanning stretches (helical) occupy residues 1–21 (MNFL…SYGN) and 47–67 (FIGV…SFLI).

The protein belongs to the ATPase C chain family. F-type ATPases have 2 components, F(1) - the catalytic core - and F(0) - the membrane proton channel. F(1) has five subunits: alpha(3), beta(3), gamma(1), delta(1), epsilon(1). F(0) has three main subunits: a(1), b(2) and c(10-14). The alpha and beta chains form an alternating ring which encloses part of the gamma chain. F(1) is attached to F(0) by a central stalk formed by the gamma and epsilon chains, while a peripheral stalk is formed by the delta and b chains.

Its subcellular location is the cell membrane. Functionally, f(1)F(0) ATP synthase produces ATP from ADP in the presence of a proton or sodium gradient. F-type ATPases consist of two structural domains, F(1) containing the extramembraneous catalytic core and F(0) containing the membrane proton channel, linked together by a central stalk and a peripheral stalk. During catalysis, ATP synthesis in the catalytic domain of F(1) is coupled via a rotary mechanism of the central stalk subunits to proton translocation. Key component of the F(0) channel; it plays a direct role in translocation across the membrane. A homomeric c-ring of between 10-14 subunits forms the central stalk rotor element with the F(1) delta and epsilon subunits. In Latilactobacillus sakei subsp. sakei (strain 23K) (Lactobacillus sakei subsp. sakei), this protein is ATP synthase subunit c.